The primary structure comprises 1012 residues: ATP-dependent DNA helicase MPH1 (1012 aa).

The 168-residue stretch at 94–261 (IVQKSLYQNT…EVVNNLNISN (168 aa)) folds into the Helicase ATP-binding domain. Residue 107–114 (IPTGMGKT) coordinates ATP. The DEAH box motif lies at 209-212 (DEAH). The 225-residue stretch at 430-654 (KLQKIINELS…NFVEYKKSDR (225 aa)) folds into the Helicase C-terminal domain. The segment at 493-555 (DEGFIRKNKP…AQISGMNQKQ (63 aa)) is disordered. A compositionally biased stretch (basic residues) spans 498–510 (RKNKPKGRKKADR). Residues 511-537 (LKRLEEDKQKQLSKAKQKEQEKVERSS) show a composition bias toward basic and acidic residues.

The protein belongs to the DEAD box helicase family. DEAH subfamily. FANCM sub-subfamily. In terms of assembly, interacts with the MHF histone-fold complex to form the FANCM-MHF complex.

Its subcellular location is the nucleus. It catalyses the reaction ATP + H2O = ADP + phosphate + H(+). In terms of biological role, ATP-dependent DNA helicase involved in DNA damage repair by homologous recombination and in genome maintenance. Capable of unwinding D-loops. Plays a role in limiting crossover recombinants during mitotic DNA double-strand break (DSB) repair. Component of a FANCM-MHF complex which promotes gene conversion at blocked replication forks, probably by reversal of the stalled fork. In Vanderwaltozyma polyspora (strain ATCC 22028 / DSM 70294 / BCRC 21397 / CBS 2163 / NBRC 10782 / NRRL Y-8283 / UCD 57-17) (Kluyveromyces polysporus), this protein is ATP-dependent DNA helicase MPH1.